We begin with the raw amino-acid sequence, 339 residues long: Heme A synthase (339 aa).

A run of 8 helical transmembrane segments spans residues 7-27, 92-112, 126-146, 159-179, 199-219, 254-274, 291-311, and 312-332; these read VIIWLLSGCFLVFIMVVVGGI, HRFIGRIIGLVFIIPFIYFLI, ILLGMGAFQGFLGWFMVKSGL, LHLTFAFITFAYTLWVALDLI, AIIILQIIYGGFVAGLNAGLI, VQFVHRTIAYFVAGLIVFLTF, ALLIIVFIQFTLGVLTLLYSV, and PLWLGVIHQAMAFILLATTTY. His-258 contributes to the heme binding site. Residue His-319 participates in heme binding.

It belongs to the COX15/CtaA family. Type 2 subfamily. In terms of assembly, interacts with CtaB. Heme b serves as cofactor.

It is found in the cell membrane. The catalysed reaction is Fe(II)-heme o + 2 A + H2O = Fe(II)-heme a + 2 AH2. It functions in the pathway porphyrin-containing compound metabolism; heme A biosynthesis; heme A from heme O: step 1/1. Catalyzes the conversion of heme O to heme A by two successive hydroxylations of the methyl group at C8. The first hydroxylation forms heme I, the second hydroxylation results in an unstable dihydroxymethyl group, which spontaneously dehydrates, resulting in the formyl group of heme A. The chain is Heme A synthase from Flavobacterium psychrophilum (strain ATCC 49511 / DSM 21280 / CIP 103535 / JIP02/86).